Reading from the N-terminus, the 1139-residue chain is MNEDEAIQNITKKIEREKALINAANAMRSQTNNEAVRSPLDSQMRDGRRNLQFFEEKLRDIQLRKVGQGVEGMSLGADDAGRPPPPPKDASSAAWGDQAAYGQQSQVGPPSDLAPPRHNFGAPGPGAASKARPNFTKLDLIKYDTPYLGPRIQHMLSQIQFKLNVEEQYLKGVEKMVQLYGMEGDRKSKADAAARRVESKQKILLLKQALKRYEELHVDMDSADAQDDDSINTPNLRKPLSGQLSIRVVAIKDVDHATTGRFARGPETFVAVKVEDTVMARTKVSRNDRWEAEYHNMEVDKANEIELTIYDKPGEHPMPIAMLWVRISDIVEEMRRKRIEAEMNSSGWVSADRMGSTGAPSQFPMSPTSGSFGGSPQAPGGGQGQAPGPFGDPAPQPQVVTGPIDGWFNLEPAGQIQLEFSFVKENRDKRQVDLGLGRKGAVRQRKEEVHEMFGHKFVQHQFYNIMPCALCGDFLKYSAGMQCEDCKYTCHNKCYPSVVTKCISKSNAETDPDEEKINHRIPHRFQPFSNVTANWCCHCGYILPFGKKNCRKCSECGLTSHAQCVHLVPDFCGMSMAVANQILEGIRVQKQRQQKTTSLSEKTLRSGATKSPTTAGHGSSASFSSAGAGSVPGTPSAEATEAARLMYNQTSPQRPGQPGRAPSDLSAAAAASAAMAAAQGRTGYDSGPQDPYGQGHYGAAGPAPQHHKYNPADYANVDQGFPAQPPAQQRPPQPQQQQQAPPAQMPPQQPPPQQPLPPQPGQQYQQQQPAAQKPQPQPPATAQGAAAGPPGSQRKALPSATDPGTGARIGLDHFNFLAVLGKGNFGKVMLAETKRSKRLFAIKVLKKEFIIENDEVESIKSEKRVFLIANRERHPFLTNLHACFQTETRVYFVMEYISGGDLMLHIQRGQFGTKRAQFYAAEVCLALKYFHENGVIYRDLKLDNIMLTLDGHIKIADYGLCKEDMWYGSTTSTFCGTPEFMAPEILLDKKYGRAVDWWAFGVLIYQMLLQQSPFRGEDEDEIYDAILADEPLYPIHMPRDSVSILQKLLTREPDQRLGSGPTDAQEVMSQPFFRNINWDDIYHKRVQPPFLPQIKSATDTSNFDSEFTSVTPVLTPVQSVLSQAMQEEFRGFSYTADLD.

The REM-1 1 domain occupies 1 to 67; sequence MNEDEAIQNI…LRDIQLRKVG (67 aa). The segment at 72–132 is disordered; sequence GMSLGADDAG…PGPGAASKAR (61 aa). The REM-1 2 domain occupies 142-219; sequence KYDTPYLGPR…LKRYEELHVD (78 aa). The C2 domain occupies 225–343; sequence AQDDDSINTP…MRRKRIEAEM (119 aa). The segment at 349–404 is disordered; that stretch reads VSADRMGSTGAPSQFPMSPTSGSFGGSPQAPGGGQGQAPGPFGDPAPQPQVVTGPI. A compositionally biased stretch (polar residues) spans 358 to 368; that stretch reads GAPSQFPMSPT. 2 consecutive Phorbol-ester/DAG-type zinc fingers follow at residues 454-502 and 522-572; these read GHKF…VTKC and PHRF…PDFC. Disordered regions lie at residues 590-637, 649-668, and 679-804; these read KQRQ…TPSA, QTSP…LSAA, and QGRT…TDPG. The span at 594 to 614 shows a compositional bias: polar residues; the sequence is QKTTSLSEKTLRSGATKSPTT. The span at 615–629 shows a compositional bias: low complexity; sequence AGHGSSASFSSAGAG. 2 stretches are compositionally biased toward pro residues: residues 723–734 and 743–760; these read AQPPAQQRPPQP and AQMP…PPQP. Positions 761 to 793 are enriched in low complexity; it reads GQQYQQQQPAAQKPQPQPPATAQGAAAGPPGSQ. Residues 814 to 1073 form the Protein kinase domain; the sequence is FNFLAVLGKG…AQEVMSQPFF (260 aa). ATP-binding positions include 820–828 and lysine 843; that span reads LGKGNFGKV. The active-site Proton acceptor is the aspartate 939. One can recognise an AGC-kinase C-terminal domain in the interval 1074 to 1139; that stretch reads RNINWDDIYH…RGFSYTADLD (66 aa).

It belongs to the protein kinase superfamily. AGC Ser/Thr protein kinase family. PKC subfamily.

It catalyses the reaction L-seryl-[protein] + ATP = O-phospho-L-seryl-[protein] + ADP + H(+). It carries out the reaction L-threonyl-[protein] + ATP = O-phospho-L-threonyl-[protein] + ADP + H(+). With respect to regulation, stimulated about twofold by phospholipids or phorbol esters. This chain is Protein kinase C-like (pkc1), found in Hypocrea jecorina (Trichoderma reesei).